A 339-amino-acid polypeptide reads, in one-letter code: Annexin A2 (339 aa).

Ser2 bears the N-acetylserine mark. The tract at residues 2-24 is S100A10-binding site; that stretch reads STVHEILCKLSLEGDHSTPASAY. Position 24 is a phosphotyrosine; by SRC (Tyr24). Ser26 is subject to Phosphoserine; by PKC. 2 Annexin repeats span residues 33 to 104 and 105 to 176; these read FDAE…GLLK and TPAQ…ALAK. The residue at position 49 (Lys49) is an N6-acetyllysine; alternate. Residue Lys49 forms a Glycyl lysine isopeptide (Lys-Gly) (interchain with G-Cter in SUMO1); alternate linkage. Lys49 participates in a covalent cross-link: Glycyl lysine isopeptide (Lys-Gly) (interchain with G-Cter in SUMO2); alternate. Position 152 is an N6-acetyllysine (Lys152). Residue Ser184 is modified to Phosphoserine. Annexin repeat units follow at residues 189–261 and 265–336; these read ELID…NLVQ and NKPL…YLCG. Residue Tyr199 is modified to Phosphotyrosine. The residue at position 227 (Lys227) is an N6-acetyllysine.

Belongs to the annexin family. Heterotetramer containing 2 light chains of S100A10/p11 and 2 heavy chains of ANXA2/p36. Interacts with ATP1B1. Interacts with DYSF. Interacts with COCH. Interacts (via repeat Annexin 1) with PCSK9 (via the C-terminal domain); the interaction inhibits the degradation of LDLR. Interacts with CEACAM1 (via the cytoplasmic domain); this interaction is regulated by phosphorylation of CEACAM1. Interacts with APPL2 and APPL1; targets APPL2 to endosomes and acting in parallel to RAB5A. Interacts with S100A4. May interact with UBAP2. Interacts with PLEKHG4B; this interaction is required for PLEKHG4B localization to cell-cell adhesions. In terms of assembly, (Microbial infection) Interacts with classical swine fever virus envelope glycoprotein E2. Post-translationally, ISGylated.

The protein localises to the secreted. Its subcellular location is the extracellular space. It is found in the extracellular matrix. The protein resides in the basement membrane. It localises to the melanosome. Its function is as follows. Calcium-regulated membrane-binding protein whose affinity for calcium is greatly enhanced by anionic phospholipids. It binds two calcium ions with high affinity. May be involved in heat-stress response. Inhibits PCSK9-enhanced LDLR degradation, probably reduces PCSK9 protein levels via a translational mechanism but also competes with LDLR for binding with PCSK9. Binds to endosomes damaged by phagocytosis of particulate wear debris and participates in endosomal membrane stabilization, thereby limiting NLRP3 inflammasome activation. Required for endothelial cell surface plasmin generation and may support fibrinolytic surveillance and neoangiogenesis. In terms of biological role, (Microbial infection) May serve as a receptor for classical swine fever virus (CSFV). Promotes CSFV infection. The sequence is that of Annexin A2 (ANXA2) from Sus scrofa (Pig).